Consider the following 857-residue polypeptide: Leucine-rich repeat extensin-like protein 5 (857 aa).

An N-terminal signal peptide occupies residues Met-1–Ser-31. Residues Leu-32 to Tyr-53 form an LRR 1 repeat. Asn-98 carries N-linked (GlcNAc...) asparagine glycosylation. LRR repeat units lie at residues Ile-125 to Leu-149, Thr-150 to Arg-172, Lys-174 to Leu-197, Pro-198 to Lys-221, Leu-223 to Ser-244, Val-246 to Met-267, Arg-268 to Leu-291, Lys-292 to Met-315, Val-316 to Leu-339, and Arg-341 to Leu-362. Residue Asn-293 is glycosylated (N-linked (GlcNAc...) asparagine). N-linked (GlcNAc...) asparagine glycosylation is present at Asn-344. Disordered stretches follow at residues Pro-406 to Pro-776 and Tyr-817 to Pro-839. Composition is skewed to pro residues over residues Val-408 to Ile-571 and Pro-579 to His-768. Residues Ser-615–Tyr-857 are contains the Ser-Pro(4) repeats.

Post-translationally, hydroxylated on proline residues in the S-P-P-P-P repeat. O-glycosylated on hydroxyprolines. In terms of tissue distribution, expressed in roots, leaves and flowers.

It localises to the secreted. It is found in the cell wall. Functionally, modulates cell morphogenesis by regulating cell wall formation and assembly, and/or growth polarization. This Arabidopsis thaliana (Mouse-ear cress) protein is Leucine-rich repeat extensin-like protein 5 (LRX5).